The chain runs to 344 residues: tRNA N6-adenosine threonylcarbamoyltransferase (344 aa).

Fe cation contacts are provided by H111 and H115. Residues 134–138 (LVSGG), D167, G180, and N273 each bind substrate. D301 serves as a coordination point for Fe cation.

Belongs to the KAE1 / TsaD family. It depends on Fe(2+) as a cofactor.

The protein resides in the cytoplasm. The catalysed reaction is L-threonylcarbamoyladenylate + adenosine(37) in tRNA = N(6)-L-threonylcarbamoyladenosine(37) in tRNA + AMP + H(+). Required for the formation of a threonylcarbamoyl group on adenosine at position 37 (t(6)A37) in tRNAs that read codons beginning with adenine. Is involved in the transfer of the threonylcarbamoyl moiety of threonylcarbamoyl-AMP (TC-AMP) to the N6 group of A37, together with TsaE and TsaB. TsaD likely plays a direct catalytic role in this reaction. The sequence is that of tRNA N6-adenosine threonylcarbamoyltransferase from Cupriavidus pinatubonensis (strain JMP 134 / LMG 1197) (Cupriavidus necator (strain JMP 134)).